We begin with the raw amino-acid sequence, 152 residues long: Large ribosomal subunit protein uL15 (152 aa).

The tract at residues 1 to 57 (MTSTLNTLKSNSGSRKKKLRKGRGIAAGQGASCGFGMRGQKSRSGRPTRPGFEGGQM) is disordered. Residues 14 to 23 (SRKKKLRKGR) are compositionally biased toward basic residues. Over residues 25-37 (IAAGQGASCGFGM) the composition is skewed to gly residues.

It belongs to the universal ribosomal protein uL15 family. Part of the 50S ribosomal subunit.

Binds to the 23S rRNA. This chain is Large ribosomal subunit protein uL15, found in Prochlorococcus marinus (strain MIT 9301).